The following is a 485-amino-acid chain: UDP-N-acetylmuramate--L-alanine ligase (485 aa).

127–133 (GTHGKTT) serves as a coordination point for ATP.

It belongs to the MurCDEF family.

The protein localises to the cytoplasm. It catalyses the reaction UDP-N-acetyl-alpha-D-muramate + L-alanine + ATP = UDP-N-acetyl-alpha-D-muramoyl-L-alanine + ADP + phosphate + H(+). Its pathway is cell wall biogenesis; peptidoglycan biosynthesis. Cell wall formation. The sequence is that of UDP-N-acetylmuramate--L-alanine ligase from Shewanella frigidimarina (strain NCIMB 400).